A 417-amino-acid polypeptide reads, in one-letter code: NADH-quinone oxidoreductase subunit D (417 aa).

It belongs to the complex I 49 kDa subunit family. NDH-1 is composed of 14 different subunits. Subunits NuoB, C, D, E, F, and G constitute the peripheral sector of the complex.

Its subcellular location is the cell inner membrane. The catalysed reaction is a quinone + NADH + 5 H(+)(in) = a quinol + NAD(+) + 4 H(+)(out). Functionally, NDH-1 shuttles electrons from NADH, via FMN and iron-sulfur (Fe-S) centers, to quinones in the respiratory chain. The immediate electron acceptor for the enzyme in this species is believed to be ubiquinone. Couples the redox reaction to proton translocation (for every two electrons transferred, four hydrogen ions are translocated across the cytoplasmic membrane), and thus conserves the redox energy in a proton gradient. The protein is NADH-quinone oxidoreductase subunit D of Ruthia magnifica subsp. Calyptogena magnifica.